We begin with the raw amino-acid sequence, 132 residues long: D-ribose pyranase (132 aa).

The Proton donor role is filled by His20. Substrate-binding positions include Asp28, His99, and 121–123 (YSN).

It belongs to the RbsD / FucU family. RbsD subfamily. In terms of assembly, homodecamer.

The protein localises to the cytoplasm. It catalyses the reaction beta-D-ribopyranose = beta-D-ribofuranose. It participates in carbohydrate metabolism; D-ribose degradation; D-ribose 5-phosphate from beta-D-ribopyranose: step 1/2. In terms of biological role, catalyzes the interconversion of beta-pyran and beta-furan forms of D-ribose. The sequence is that of D-ribose pyranase from Pseudomonas putida (strain GB-1).